The sequence spans 261 residues: tRNA U34 carboxymethyltransferase (261 aa).

Carboxy-S-adenosyl-L-methionine-binding positions include lysine 25, tryptophan 39, lysine 44, glycine 63, 114–115, tyrosine 135, and arginine 250; that span reads VE.

The protein belongs to the class I-like SAM-binding methyltransferase superfamily. CmoB family. As to quaternary structure, homotetramer.

The catalysed reaction is carboxy-S-adenosyl-L-methionine + 5-hydroxyuridine(34) in tRNA = 5-carboxymethoxyuridine(34) in tRNA + S-adenosyl-L-homocysteine + H(+). Catalyzes carboxymethyl transfer from carboxy-S-adenosyl-L-methionine (Cx-SAM) to 5-hydroxyuridine (ho5U) to form 5-carboxymethoxyuridine (cmo5U) at position 34 in tRNAs. The chain is tRNA U34 carboxymethyltransferase from Helicobacter pylori (strain J99 / ATCC 700824) (Campylobacter pylori J99).